Here is a 494-residue protein sequence, read N- to C-terminus: Transmembrane and coiled-coil domain-containing protein 6 (494 aa).

The stretch at 15–39 forms a coiled coil; that stretch reads GVEELRRRRREREAALRKARREQQL. Transmembrane regions (helical) follow at residues 338–358 and 386–406; these read LVAA…ALLP and PLLQ…TVLC.

The protein resides in the membrane. The sequence is that of Transmembrane and coiled-coil domain-containing protein 6 (Tmco6) from Mus musculus (Mouse).